The chain runs to 335 residues: Dolichyl-diphosphooligosaccharide--protein glycosyltransferase subunit MAGT1 (335 aa).

Residues 1–29 (MAARWRFWCVSVTMVVALLIVCDVPSASA) form the signal peptide. Over 30 to 184 (QRKKEMVLSE…DVNIRVIRPP (155 aa)) the chain is Extracellular. In terms of domain architecture, Thioredoxin spans 47–175 (WTNKRPVIRM…IARWIADRTD (129 aa)). Residue Asn71 is glycosylated (N-linked (GlcNAc...) asparagine). Residues Cys87 and Cys90 are joined by a disulfide bond. Residues 185 to 205 (NYAGPLMLGLLLAVIGGLVYL) traverse the membrane as a helical segment. At 206-209 (RRSN) the chain is on the cytoplasmic side. A helical membrane pass occupies residues 210–230 (MEFLFNKTGWAFAALCFVLAM). Over 231–270 (TSGQMWNHIRGPPYAHKNPHTGHVNYIHGSSQAQFVAETH) the chain is Extracellular. Residues 271-291 (IVLLFNGGVTLGMVLLCEAAT) form a helical membrane-spanning segment. The Cytoplasmic portion of the chain corresponds to 292-300 (SDMDIGKRK). Residues 301–321 (IMCVAGIGLVVLFFSWMLSIF) traverse the membrane as a helical segment. Topologically, residues 322–335 (RSKYHGYPYSFLMS) are extracellular.

The protein belongs to the OST3/OST6 family. In terms of assembly, accessory component of the STT3B-containing form of the oligosaccharyltransferase (OST) complex. OST exists in two different complex forms which contain common core subunits RPN1, RPN2, OST48, OST4, DAD1 and TMEM258, either STT3A or STT3B as catalytic subunits, and form-specific accessory subunits. OST can form stable complexes with the Sec61 complex or with both the Sec61 and TRAP complexes. The association of TUSC3 or MAGT1 with the STT3B-containing complex seems to be mutually exclusvice. As to expression, ubiquitous. Expressed at very low levels in brain, lung and kidney.

It localises to the cell membrane. The protein localises to the endoplasmic reticulum. It is found in the endoplasmic reticulum membrane. The protein operates within protein modification; protein glycosylation. Its function is as follows. Accessory component of the STT3B-containing form of the N-oligosaccharyl transferase (OST) complex which catalyzes the transfer of a high mannose oligosaccharide from a lipid-linked oligosaccharide donor to an asparagine residue within an Asn-X-Ser/Thr consensus motif in nascent polypeptide chains. Involved in N-glycosylation of STT3B-dependent substrates. Specifically required for the glycosylation of a subset of acceptor sites that are near cysteine residues; in this function seems to act redundantly with TUSC3. In its oxidized form proposed to form transient mixed disulfides with a glycoprotein substrate to facilitate access of STT3B to the unmodified acceptor site. Also has oxidoreductase-independent functions in the STT3B-containing OST complex possibly involving substrate recognition. Could indirectly play a role in Mg(2+) transport in epithelial cells. This Homo sapiens (Human) protein is Dolichyl-diphosphooligosaccharide--protein glycosyltransferase subunit MAGT1.